A 370-amino-acid chain; its full sequence is sn-glycerol-3-phosphate import ATP-binding protein UgpC (370 aa).

The ABC transporter domain maps to 4 to 236; that stretch reads LSLKNIAKRY…PATAFVAAFM (233 aa). 38–45 is a binding site for ATP; it reads GPSGCGKS.

The protein belongs to the ABC transporter superfamily. sn-glycerol-3-phosphate importer (TC 3.A.1.1.3) family. In terms of assembly, the complex is composed of two ATP-binding proteins (UgpC), two transmembrane proteins (UgpA and UgpE) and a solute-binding protein (UgpB).

It is found in the cell inner membrane. It carries out the reaction sn-glycerol 3-phosphate(out) + ATP + H2O = sn-glycerol 3-phosphate(in) + ADP + phosphate + H(+). Part of the ABC transporter complex UgpBAEC involved in sn-glycerol-3-phosphate (G3P) import. Responsible for energy coupling to the transport system. This is sn-glycerol-3-phosphate import ATP-binding protein UgpC from Chromobacterium violaceum (strain ATCC 12472 / DSM 30191 / JCM 1249 / CCUG 213 / NBRC 12614 / NCIMB 9131 / NCTC 9757 / MK).